The chain runs to 66 residues: Large ribosomal subunit protein bL33c (66 aa).

Belongs to the bacterial ribosomal protein bL33 family.

The protein localises to the plastid. The protein resides in the chloroplast. The protein is Large ribosomal subunit protein bL33c of Citrus sinensis (Sweet orange).